Here is a 101-residue protein sequence, read N- to C-terminus: MAKKSAVAREVKRRKLVEANFQKRAELRKLAKSLSVSEEERERAREALNKMRRDTSPSRLHNRCLLTGRPRGYLRKFAISRICFRQMASMGDIPGVVKASW.

This sequence belongs to the universal ribosomal protein uS14 family. In terms of assembly, part of the 30S ribosomal subunit. Contacts proteins S3 and S10.

In terms of biological role, binds 16S rRNA, required for the assembly of 30S particles and may also be responsible for determining the conformation of the 16S rRNA at the A site. This chain is Small ribosomal subunit protein uS14, found in Chlamydia trachomatis serovar L2 (strain ATCC VR-902B / DSM 19102 / 434/Bu).